A 464-amino-acid chain; its full sequence is Asparagine--tRNA ligase (464 aa).

Belongs to the class-II aminoacyl-tRNA synthetase family. Homodimer.

Its subcellular location is the cytoplasm. The enzyme catalyses tRNA(Asn) + L-asparagine + ATP = L-asparaginyl-tRNA(Asn) + AMP + diphosphate + H(+). The polypeptide is Asparagine--tRNA ligase (Xanthomonas euvesicatoria pv. vesicatoria (strain 85-10) (Xanthomonas campestris pv. vesicatoria)).